A 704-amino-acid chain; its full sequence is Ribosomal RNA large subunit methyltransferase K/L (704 aa).

It belongs to the methyltransferase superfamily. RlmKL family.

It localises to the cytoplasm. The enzyme catalyses guanosine(2445) in 23S rRNA + S-adenosyl-L-methionine = N(2)-methylguanosine(2445) in 23S rRNA + S-adenosyl-L-homocysteine + H(+). The catalysed reaction is guanosine(2069) in 23S rRNA + S-adenosyl-L-methionine = N(2)-methylguanosine(2069) in 23S rRNA + S-adenosyl-L-homocysteine + H(+). In terms of biological role, specifically methylates the guanine in position 2445 (m2G2445) and the guanine in position 2069 (m7G2069) of 23S rRNA. In Alcanivorax borkumensis (strain ATCC 700651 / DSM 11573 / NCIMB 13689 / SK2), this protein is Ribosomal RNA large subunit methyltransferase K/L.